We begin with the raw amino-acid sequence, 252 residues long: Flagellar brake protein YcgR (252 aa).

Residues 118–236 (QRREYFRVSI…EKGLQRAIFE (119 aa)) enclose the PilZ domain.

Belongs to the YcgR family. In terms of assembly, monomer. Interacts with the flagellar basal bodies.

Its subcellular location is the bacterial flagellum basal body. Acts as a flagellar brake, regulating swimming and swarming in a bis-(3'-5') cyclic diguanylic acid (c-di-GMP)-dependent manner. Binds 1 c-di-GMP dimer per subunit. Increasing levels of c-di-GMP lead to decreased motility. The chain is Flagellar brake protein YcgR from Yersinia pseudotuberculosis serotype I (strain IP32953).